Reading from the N-terminus, the 58-residue chain is Alpha-conotoxin AuIB (58 aa).

A signal peptide spans 1–16 (MFTVFLLVVLATTVVS). Positions 17–39 (FTSDRASDGRKDAASGLIALTMK) are excised as a propeptide. Disulfide bonds link C41–C47 and C42–C54. C54 is subject to Cysteine amide.

As to expression, expressed by the venom duct.

It is found in the secreted. Alpha-conotoxins act on postsynaptic membranes, they bind to the nicotinic acetylcholine receptors (nAChR) and thus inhibit them. This toxin blocks mammalian nAChR alpha-3-beta-4/CHRNA3-CHRNB4 subunits. Also exhibits inhibition of D.melanogaster alpha-7/CHRNA7 nAChRs. This is Alpha-conotoxin AuIB from Conus aulicus (Princely cone).